A 336-amino-acid polypeptide reads, in one-letter code: Tryptophan--tRNA ligase (336 aa).

ATP contacts are provided by residues 13–15 (QPS) and 21–22 (GN). A 'HIGH' region motif is present at residues 14 to 22 (PSGNLTIGN). D140 serves as a coordination point for L-tryptophan. Residues 152 to 154 (GQD), I191, and 200 to 204 (KMSKS) each bind ATP. The short motif at 200–204 (KMSKS) is the 'KMSKS' region element.

The protein belongs to the class-I aminoacyl-tRNA synthetase family. In terms of assembly, homodimer.

The protein resides in the cytoplasm. The catalysed reaction is tRNA(Trp) + L-tryptophan + ATP = L-tryptophyl-tRNA(Trp) + AMP + diphosphate + H(+). Its function is as follows. Catalyzes the attachment of tryptophan to tRNA(Trp). The protein is Tryptophan--tRNA ligase of Buchnera aphidicola subsp. Schizaphis graminum (strain Sg).